A 587-amino-acid chain; its full sequence is Polyphenol oxidase E, chloroplastic (587 aa).

The transit peptide at 1-87 (MSSSSSITTT…AANLAPLATA (87 aa)) directs the protein to the chloroplast. 2 disulfides stabilise this stretch: Cys-98–Cys-114 and Cys-113–Cys-180. Residues His-179, His-197, His-206, His-328, His-332, and His-363 each contribute to the Cu cation site. The 2'-(S-cysteinyl)-histidine (Cys-His) cross-link spans 183–197 (CNGAYKVGGKELQVH).

Belongs to the tyrosinase family. Cu(2+) serves as cofactor.

Its subcellular location is the plastid. The protein resides in the chloroplast thylakoid lumen. The enzyme catalyses 2 catechol + O2 = 2 1,2-benzoquinone + 2 H2O. Functionally, catalyzes the oxidation of mono- and o-diphenols to o-diquinones. The sequence is that of Polyphenol oxidase E, chloroplastic from Solanum lycopersicum (Tomato).